Here is a 494-residue protein sequence, read N- to C-terminus: Myocyte-specific enhancer factor 2A (494 aa).

An MADS-box domain is found at 3–57 (RKKIQITRIMDERNRQVTFTKRKFGLMKKAYELSVLCDCEIALIIFNSSNKLFQY). A DNA-binding region (mef2-type) is located at residues 58-86 (ASTDMDKVLLKYTEYNEPHESRTNSDIVE). S59 carries the post-translational modification Phosphoserine; by CK2. A phosphoserine mark is found at S98 and S108. A compositionally biased stretch (low complexity) spans 171-181 (TLTDSSMLSPP). The tract at residues 171 to 218 (TLTDSSMLSPPQTTLHRNVSPGAPQRPPSTGNAGGMLSTTDLIVPNGA) is disordered. The residue at position 233 (S233) is a Phosphoserine. The segment at 238–268 (GATGANSLGKVMPTKSPPPPGGGNLGMNSRK) is disordered. K247 carries the N6-acetyllysine modification. Phosphoserine is present on S253. The segment at 264 to 281 (MNSRKPDLRVVIPPSSKG) is required for interaction with MAPKs. Phosphothreonine; by MAPK7 and MAPK14 is present on residues T302 and T309. The residue at position 345 (S345) is a Phosphoserine; by MAPK7. Over residues 380-392 (SNLSINTNQNINI) the composition is skewed to polar residues. A disordered region spans residues 380-494 (SNLSINTNQN…KRMRMDAWVT (115 aa)). K393 carries the post-translational modification N6-acetyllysine; alternate. K393 participates in a covalent cross-link: Glycyl lysine isopeptide (Lys-Gly) (interchain with G-Cter in SUMO); alternate. At S398 the chain carries Phosphoserine; by CDK5. Position 405 is a phosphothreonine (T405). Positions 418–432 (QPPPPPPQPQPPQPQ) are enriched in pro residues. S440 carries the post-translational modification Phosphoserine. The segment covering 440 to 453 (SPVDSLSSSSSSYD) has biased composition (low complexity). Basic and acidic residues-rich tracts occupy residues 454 to 464 (GSDREDPRGDF) and 475 to 494 (NTED…AWVT).

As to quaternary structure, binds DNA as a homo- or heterodimer. Dimerizes with MEF2D. Interacts with HDAC7. Interacts with PIAS1; the interaction enhances sumoylation. Interacts with HDAC4, HDAC9 and SLC2A4RG. Interacts (via the N-terminal) with MAPK7; the interaction results in the phosphorylation and transcriptional activity of MEF2A. In terms of processing, constitutive phosphorylation on Ser-398 promotes Lys-393 sumoylation thus preventing acetylation at this site. Dephosphorylation on Ser-398 by PPP3CA upon neuron depolarization promotes a switch from sumoylation to acetylation on residue Lys-393 leading to inhibition of dendrite claw differentiation. Phosphorylation on Thr-302 and Thr-309 are the main sites involved in p38 MAPK signaling and activate transcription. Phosphorylated on these sites by MAPK14/p38alpha and MAPK11/p38beta, but not by MAPK13/p38delta nor by MAPK12/p38gamma. Phosphorylation on Ser-398 by CDK5 induced by neurotoxicity inhibits MEF2A transcriptional activation leading to apoptosis of cortical neurons. Phosphorylation on Thr-302, Thr-309 and Ser-345 can be induced by EGF. Sumoylation on Lys-393 is enhanced by PIAS1 and represses transcriptional activity. Phosphorylation on Ser-398 is required for sumoylation. Has no effect on nuclear location nor on DNA binding. Sumoylated with SUMO1 and, to a lesser extent with SUMO2 and SUMO3. PIASx facilitates sumoylation in postsynaptic dendrites in the cerebellar cortex and promotes their morphogenesis. Post-translationally, acetylation on Lys-393 activates transcriptional activity. Acetylated by p300 on several sites in diffentiating myocytes. Acetylation on Lys-4 increases DNA binding and transactivation. Hyperacetylation by p300 leads to enhanced cardiac myocyte growth and heart failure. In terms of processing, proteolytically cleaved in cerebellar granule neurons on several sites by caspase 3 and caspase 7 following neurotoxicity. Preferentially cleaves the CDK5-mediated hyperphosphorylated form which leads to neuron apoptosis and transcriptional inactivation.

Its subcellular location is the nucleus. Functionally, transcriptional activator which binds specifically to the MEF2 element, 5'-YTA[AT](4)TAR-3', found in numerous muscle-specific genes. Also involved in the activation of numerous growth factor- and stress-induced genes. Mediates cellular functions not only in skeletal and cardiac muscle development, but also in neuronal differentiation and survival. Plays diverse roles in the control of cell growth, survival and apoptosis via p38 MAPK signaling in muscle-specific and/or growth factor-related transcription. In cerebellar granule neurons, phosphorylated and sumoylated MEF2A represses transcription of NUR77 promoting synaptic differentiation. Associates with chromatin to the ZNF16 promoter. This chain is Myocyte-specific enhancer factor 2A (MEF2A), found in Pongo abelii (Sumatran orangutan).